We begin with the raw amino-acid sequence, 411 residues long: Glutamate dehydrogenase 1 (411 aa).

Residue Lys102 is part of the active site.

Belongs to the Glu/Leu/Phe/Val dehydrogenases family.

It carries out the reaction L-glutamate + NAD(+) + H2O = 2-oxoglutarate + NH4(+) + NADH + H(+). It catalyses the reaction L-glutamate + NADP(+) + H2O = 2-oxoglutarate + NH4(+) + NADPH + H(+). This is Glutamate dehydrogenase 1 (GDH1) from Arabidopsis thaliana (Mouse-ear cress).